Consider the following 214-residue polypeptide: Outer-membrane lipoprotein LolB (214 aa).

The signal sequence occupies residues 1-25 (MNNLKRFTKSIFSCIALSGLLFLGG). Cys26 is lipidated: N-palmitoyl cysteine. The S-diacylglycerol cysteine moiety is linked to residue Cys26.

Belongs to the LolB family. As to quaternary structure, monomer.

The protein resides in the cell outer membrane. Functionally, plays a critical role in the incorporation of lipoproteins in the outer membrane after they are released by the LolA protein. The sequence is that of Outer-membrane lipoprotein LolB from Shewanella sp. (strain MR-4).